The following is a 175-amino-acid chain: NADH dehydrogenase [ubiquinone] iron-sulfur protein 4, mitochondrial (175 aa).

The transit peptide at 1 to 42 (MAAVSISVSLRQAMLGRRAMATAAVSVCRVPSRLLSTSTWKL) directs the protein to the mitochondrion. Residue S173 is modified to Phosphoserine.

The protein belongs to the complex I NDUFS4 subunit family. As to quaternary structure, this is a component of the iron-sulfur (IP) fragment of the enzyme. Interacts with BCAP31 and TOMM40; the interaction mediates its translocation to the mitochondria; the interaction with BCAP31 is direct.

Its subcellular location is the mitochondrion inner membrane. Functionally, accessory subunit of the mitochondrial membrane respiratory chain NADH dehydrogenase (Complex I), that is believed not to be involved in catalysis. Complex I functions in the transfer of electrons from NADH to the respiratory chain. The immediate electron acceptor for the enzyme is believed to be ubiquinone. The chain is NADH dehydrogenase [ubiquinone] iron-sulfur protein 4, mitochondrial (Ndufs4) from Mus musculus (Mouse).